The sequence spans 246 residues: Small ribosomal subunit protein uS3A (246 aa).

Residues 21–92 (LNEFLTRELA…SVELYAEKVA (72 aa)) enclose the KH type-2 domain. The tract at residues 215–246 (DEIVPTTPISEQKAAKPDQPQPPAMPQPVATA) is disordered.

It belongs to the universal ribosomal protein uS3 family.

It localises to the cytoplasm. It is found in the nucleus. The protein localises to the nucleolus. Its subcellular location is the mitochondrion inner membrane. The protein resides in the cytoskeleton. It localises to the spindle. The catalysed reaction is 2'-deoxyribonucleotide-(2'-deoxyribose 5'-phosphate)-2'-deoxyribonucleotide-DNA = a 3'-end 2'-deoxyribonucleotide-(2,3-dehydro-2,3-deoxyribose 5'-phosphate)-DNA + a 5'-end 5'-phospho-2'-deoxyribonucleoside-DNA + H(+). Functionally, component of the small ribosomal subunit. The ribosome is a large ribonucleoprotein complex responsible for the synthesis of proteins in the cell. Has endonuclease activity and plays a role in repair of damaged DNA. Also involved in other processes including regulation of transcription, translation of its cognate mRNA, spindle formation and chromosome movement during mitosis, and apoptosis. The protein is Small ribosomal subunit protein uS3A (rps3-a) of Xenopus laevis (African clawed frog).